We begin with the raw amino-acid sequence, 318 residues long: L-lactate dehydrogenase (318 aa).

NAD(+) is bound by residues valine 18, aspartate 39, lysine 44, tyrosine 69, and 83–84 (GA). Substrate-binding residues include glutamine 86 and arginine 92. NAD(+)-binding positions include serine 105, 122–124 (VSN), and serine 147. Residue 124-127 (NPVD) coordinates substrate. 152 to 155 (DTSR) contacts substrate. Residue histidine 179 is the Proton acceptor of the active site. The residue at position 225 (tyrosine 225) is a Phosphotyrosine. Threonine 234 provides a ligand contact to substrate.

It belongs to the LDH/MDH superfamily. LDH family. Homotetramer.

It localises to the cytoplasm. It catalyses the reaction (S)-lactate + NAD(+) = pyruvate + NADH + H(+). It functions in the pathway fermentation; pyruvate fermentation to lactate; (S)-lactate from pyruvate: step 1/1. Its function is as follows. Catalyzes the conversion of lactate to pyruvate. The polypeptide is L-lactate dehydrogenase (Clostridium botulinum (strain Okra / Type B1)).